The sequence spans 370 residues: uncharacterized protein (370 aa).

An N-terminal signal peptide occupies residues 1–27 (MSSAANEGCVYLFIVVLRLSSFSCVNS). N-linked (GlcNAc...) asparagine glycosylation is found at Asn59, Asn98, and Asn126. Disordered stretches follow at residues 81 to 101 (SRSH…NTTA) and 123 to 167 (LSEN…CHQP). Positions 139-148 (HDDDDDDDLE) are enriched in acidic residues. N-linked (GlcNAc...) asparagine glycosylation is found at Asn171, Asn221, Asn230, and Asn262.

This is an uncharacterized protein from Saccharomyces cerevisiae (strain ATCC 204508 / S288c) (Baker's yeast).